A 338-amino-acid polypeptide reads, in one-letter code: UbiA prenyltransferase domain-containing protein 1 (338 aa).

The interval 1–39 (MAAVQAPGEKINIQAGETTQVGDTDQQRNDWPEEDRLPE) is disordered. Position 2 is an N-acetylalanine (Ala2). A compositionally biased stretch (polar residues) spans 15 to 24 (AGETTQVGDT). Over residues 25–39 (DQQRNDWPEEDRLPE) the composition is skewed to basic and acidic residues. 8 helical membrane-spanning segments follow: residues 83-103 (LLLG…LVNT), 134-154 (FGVF…YLST), 160-180 (LALI…GIGF), 188-208 (LVIL…VQVG), 209-229 (SLAI…EAIL), 245-267 (IVTL…LLFL), 277-297 (THCS…FSLE), and 315-335 (LNLL…AGSL).

The protein belongs to the UbiA prenyltransferase family. In terms of assembly, interacts with HMGCR and SOAT1.

It localises to the endoplasmic reticulum membrane. It is found in the golgi apparatus membrane. The protein resides in the mitochondrion membrane. The catalysed reaction is menadiol + (2E,6E,10E)-geranylgeranyl diphosphate = menaquinol-4 + diphosphate. It carries out the reaction all-trans-decaprenyl diphosphate + 4-hydroxybenzoate = 4-hydroxy-3-(all-trans-decaprenyl)benzoate + diphosphate. It participates in quinol/quinone metabolism; menaquinone biosynthesis. Its pathway is cofactor biosynthesis; ubiquinone biosynthesis. Prenyltransferase that mediates the formation of menaquinone-4 (MK-4) and coenzyme Q10. MK-4 is a vitamin K2 isoform required for endothelial cell development. Mediates the conversion of phylloquinone (PK) into MK-4, probably by cleaving the side chain of phylloquinone (PK) to release 2-methyl-1,4-naphthoquinone (menadione; K3) and then prenylating it with geranylgeranyl pyrophosphate (GGPP) to form MK-4. Also plays a role in cardiovascular development independently of MK-4 biosynthesis, by acting as a coenzyme Q10 biosynthetic enzyme: coenzyme Q10, also named ubiquinone, plays an important antioxidant role in the cardiovascular system. Mediates biosynthesis of coenzyme Q10 in the Golgi membrane, leading to protect cardiovascular tissues from NOS3/eNOS-dependent oxidative stress. The chain is UbiA prenyltransferase domain-containing protein 1 (Ubiad1) from Rattus norvegicus (Rat).